Here is a 279-residue protein sequence, read N- to C-terminus: Protein PHOTOPERIODIC CONTROL OF HYPOCOTYL 1-LIKE (279 aa).

In terms of assembly, interacts with light-activated phyB. Binds directly to PIF1 and COP1. Ubiquitinated by COP1 in darkness; this leads to proteasomal degradation. Mainly expressed in cotyledons, hypocotyls, leaves.

The protein localises to the nucleus. In terms of biological role, together with PCH1, regulates growth and development adaptation to the ambient environment by controlling negatively phytochrome B (phyB) dark reversion, a temperature-dependent thermal relaxation process during which phyB reverts from the active to the inactive state. Contributes to red (R) light-triggered photomorphogenesis. Promotes various light responses such as seed germination, hypocotyl gravitropism and chlorophyll biosynthesis, via direct interaction with PIF1 and COP1. Prevents DNA-binding ability of PIF1 to negatively regulate the expressions of its target genes. Facilitates the physical interaction between phyB and PIF1 and the subsequent light-induced degradation of PIF1. This is Protein PHOTOPERIODIC CONTROL OF HYPOCOTYL 1-LIKE from Arabidopsis thaliana (Mouse-ear cress).